We begin with the raw amino-acid sequence, 247 residues long: Triosephosphate isomerase (247 aa).

8–10 (NWK) is a substrate binding site. His-94 functions as the Electrophile in the catalytic mechanism. Glu-165 serves as the catalytic Proton acceptor. 2 residues coordinate substrate: Gly-171 and Ser-210.

Belongs to the triosephosphate isomerase family. As to quaternary structure, homodimer.

It is found in the cytoplasm. It catalyses the reaction D-glyceraldehyde 3-phosphate = dihydroxyacetone phosphate. Its pathway is carbohydrate biosynthesis; gluconeogenesis. It participates in carbohydrate degradation; glycolysis; D-glyceraldehyde 3-phosphate from glycerone phosphate: step 1/1. Its function is as follows. Involved in the gluconeogenesis. Catalyzes stereospecifically the conversion of dihydroxyacetone phosphate (DHAP) to D-glyceraldehyde-3-phosphate (G3P). The chain is Triosephosphate isomerase from Aquifex aeolicus (strain VF5).